The following is a 745-amino-acid chain: MSVIAGHHVPRSNDQRQYDTPSVPINIAPDSEGHIHEMSRLKDYEVIEKLGQGTFGVVQKAKSKKDGSLVAIKQLINHSAKEGFPITAMREITILKQLNHKNILTIQDMIFEEPKMSNRTDIITMRGSFYTVTPYMSSDLVGLLENPKIKLELGQIKCIMQQLLKGIQYVHNQKFLHRDIKAANILIGQDGVLKIADFGLARIYHGNVPRLGMGPGGGEKAYTGLVVTRWYRPPEILLGERKYTTAVDLWGIGCVFAELFTGKPILVGKSDSHQAQIVFELVGSPLTWTDAAKLPNKNEYSCGLACKRSLEAKFASIMPTEAIDLLSGLLTLDPFKRLNALDALNHKFFSTDPLPLLPTQMPKFEESHEIDKERFKKLKDKEQAVSELKPPTEIRYDNHSESRYNADHSTFGGGVGGKETSFSSGKSDYIDHYEPRARRDHYEPRIRNDNKDSNDVRGEFESATRQEQRRRDIQNRLDAGGMDTYIPKTTTAKLREHSGTESLSKKYDNYQPINVSRGSKSPSPSKLSSISQSKADLISKPSAPKVASRESSLERKQVSNGIRTTTDVEPPRARARRPTDMFGRPLTSNSTQAQPTRNKSVERPKDLEKPTNGVTEDRNKKPVLEEKKEVVKPNLAIPKIKKSSSLVSLSSRSSTTPVISNPSKVTKRAASSVTPPVLPKKPKISKTSSESEVSDLEEDSDFTGENATVFERFMALEQLQKSPVYKRIINEKMRFEKLSGGHKSM.

The disordered stretch occupies residues 1–21 (MSVIAGHHVPRSNDQRQYDTP). The Protein kinase domain maps to 44–349 (YEVIEKLGQG…ALDALNHKFF (306 aa)). ATP contacts are provided by residues 50–58 (LGQGTFGVV) and lysine 73. Aspartate 179 acts as the Proton acceptor in catalysis. Basic and acidic residues-rich tracts occupy residues 380–406 (DKEQAVSELKPPTEIRYDNHSESRYNA), 428–475 (DYID…DIQN), and 493–508 (KLREHSGTESLSKKYD). Residues 380-701 (DKEQAVSELK…EVSDLEEDSD (322 aa)) form a disordered region. Low complexity predominate over residues 516–534 (SRGSKSPSPSKLSSISQSK). Positions 547-557 (ASRESSLERKQ) are enriched in basic and acidic residues. 2 stretches are compositionally biased toward polar residues: residues 558 to 567 (VSNGIRTTTD) and 586 to 598 (LTSNSTQAQPTRN). The span at 599-631 (KSVERPKDLEKPTNGVTEDRNKKPVLEEKKEVV) shows a compositional bias: basic and acidic residues. Residues 632–660 (KPNLAIPKIKKSSSLVSLSSRSSTTPVIS) show a composition bias toward low complexity. The segment covering 661-674 (NPSKVTKRAASSVT) has biased composition (polar residues). Residues 692 to 701 (EVSDLEEDSD) show a composition bias toward acidic residues.

The protein belongs to the protein kinase superfamily. CMGC Ser/Thr protein kinase family. CDC2/CDKX subfamily.

The protein localises to the nucleus. It carries out the reaction L-seryl-[protein] + ATP = O-phospho-L-seryl-[protein] + ADP + H(+). The catalysed reaction is L-threonyl-[protein] + ATP = O-phospho-L-threonyl-[protein] + ADP + H(+). It catalyses the reaction [DNA-directed RNA polymerase] + ATP = phospho-[DNA-directed RNA polymerase] + ADP + H(+). In terms of biological role, serine/threonine-protein kinase involved in transcription regulation. Phosphorylates the UBC2/RAD6 ubiquitin-conjugating enzyme (E2), leading to monoubiquitination of histone H2B and the silencing of telomeric-associated genes. Also required for histone H3 methylation. Necessary for the recovery from pheromone-induced growth arrest in the cell cycle G1 phase. Required for pseudohyphal growth and virulence in mice. This Candida albicans (strain SC5314 / ATCC MYA-2876) (Yeast) protein is Serine/threonine-protein kinase BUR1 (CRK1).